Reading from the N-terminus, the 403-residue chain is S-arrestin (403 aa).

The tract at residues 11 to 19 (HVIFKKVSR) is interaction with RHO. Thr-231 is subject to Phosphothreonine. The segment at 381 to 403 (RQNLKDTGENTEGKKDEDAGQDE) is disordered.

This sequence belongs to the arrestin family. In terms of assembly, monomer. Homodimer. Homotetramer. Interacts with RHO (via the phosphorylated C-terminus). Detected in retina (at protein level).

It is found in the cell projection. Its subcellular location is the cilium. The protein localises to the photoreceptor outer segment. It localises to the membrane. Its function is as follows. Binds to photoactivated, phosphorylated RHO and terminates RHO signaling via G-proteins by competing with G-proteins for the same binding site on RHO. May play a role in preventing light-dependent degeneration of retinal photoreceptor cells. This chain is S-arrestin (Sag), found in Mus musculus (Mouse).